The primary structure comprises 151 residues: Gametocyte-specific factor 1-like (151 aa).

2 consecutive CHHC U11-48K-type zinc fingers follow at residues 6–33 (IEIC…RKKN) and 40–67 (MASC…VNRS). Positions 9, 15, 25, 29, 43, 49, 59, and 63 each coordinate Zn(2+). The disordered stretch occupies residues 130–151 (QESRGGDQCPEDPQTRTRKANF).

This sequence belongs to the UPF0224 (FAM112) family.

The protein is Gametocyte-specific factor 1-like (Gtsf1l) of Mus musculus (Mouse).